Reading from the N-terminus, the 1058-residue chain is Bromodomain-containing protein 1 (1058 aa).

Over residues Met1–Ala12 the composition is skewed to basic residues. The segment at Met1–Ser25 is disordered. Residues Leu31–Ser80 form an interaction with KAT7/HBO1 and histones region. A Phosphoserine modification is found at Ser128. The segment at Asp214–Ser264 adopts a PHD-type 1 zinc-finger fold. Residues Pro268 to Val301 form a C2HC pre-PHD-type zinc finger. A PHD-type 2 zinc finger spans residues Leu325 to Thr389. N6-acetyllysine is present on residues Lys368, Lys516, and Lys519. Residues Lys554 and Lys594 each participate in a glycyl lysine isopeptide (Lys-Gly) (interchain with G-Cter in SUMO2) cross-link. In terms of domain architecture, Bromo spans Leu562 to Ala666. The segment covering Lys754–Pro763 has biased composition (polar residues). Disordered stretches follow at residues Lys754–Ala776 and Leu791–Arg847. A Phosphoserine modification is found at Ser803. Lys903 carries the N6-acetyllysine modification. A PWWP domain is found at Pro929–Asp1012. A phosphoserine mark is found at Ser1052 and Ser1055.

As to quaternary structure, component of some HBO1 complexes composed of KAT7/HBO1, MEAF6, ING4 and BRD1/BRPF2. Component of the MOZ/MORF complex composed at least of ING5, KAT6A, KAT6B, MEAF6 and one of BRPF1, BRD1/BRPF2 and BRPF3. Interacts (via PHD-type zinc finger domain) with unmodified histone H3. Interacts (via PWWP domain) with dimethylated and trimethylated 'Lys-79' on histone H3.

The protein resides in the nucleus. It localises to the chromosome. Its function is as follows. Scaffold subunit of various histone acetyltransferase (HAT) complexes, such as the MOZ/MORF and HBO1 complexes, that acts as a regulator of hematopoiesis. Plays a key role in HBO1 complex by directing KAT7/HBO1 specificity towards histone H3 'Lys-14' acetylation (H3K14ac), thereby promoting erythroid differentiation. The sequence is that of Bromodomain-containing protein 1 from Mus musculus (Mouse).